The chain runs to 80 residues: EMBRYO SURROUNDING FACTOR 1-like protein 1 (80 aa).

The first 22 residues, 1–22 (MKSSHIALLCIVVLSLFALHEC), serve as a signal peptide directing secretion. 4 cysteine pairs are disulfide-bonded: Cys38-Cys52, Cys43-Cys78, Cys50-Cys74, and Cys53-Cys64.

This sequence belongs to the MEG family. In terms of tissue distribution, expressed in leaves.

This Arabidopsis thaliana (Mouse-ear cress) protein is EMBRYO SURROUNDING FACTOR 1-like protein 1 (ESFL1).